Reading from the N-terminus, the 163-residue chain is Protein YtsP (163 aa).

It belongs to the free Met sulfoxide reductase family.

In Bacillus subtilis (strain 168), this protein is Protein YtsP (ytsP).